The chain runs to 569 residues: Potassium-transporting ATPase potassium-binding subunit (569 aa).

10 helical membrane passes run 3–23, 68–88, 136–156, 179–199, 259–279, 284–304, 384–404, 422–442, 490–510, and 534–554; these read LMEY…SPVL, AASL…VLML, VGLA…AVAV, VLYV…GQGV, LQML…GGAV, HAWT…CSLY, GLYG…LMVG, AMLA…VAAV, IALA…GVAG, and LLLT…ALAL.

This sequence belongs to the KdpA family. The system is composed of three essential subunits: KdpA, KdpB and KdpC.

It localises to the cell inner membrane. Its function is as follows. Part of the high-affinity ATP-driven potassium transport (or Kdp) system, which catalyzes the hydrolysis of ATP coupled with the electrogenic transport of potassium into the cytoplasm. This subunit binds the periplasmic potassium ions and delivers the ions to the membrane domain of KdpB through an intramembrane tunnel. The sequence is that of Potassium-transporting ATPase potassium-binding subunit from Nitratidesulfovibrio vulgaris (strain ATCC 29579 / DSM 644 / CCUG 34227 / NCIMB 8303 / VKM B-1760 / Hildenborough) (Desulfovibrio vulgaris).